Consider the following 394-residue polypeptide: 2-aminobenzenesulfonate 2,3-dioxygenase subunit alpha (394 aa).

Residues 43–154 enclose the Rieske domain; the sequence is WKFVCHVSEI…TETYLGLVFV (112 aa). 4 residues coordinate [2Fe-2S] cluster: C85, H87, C105, and H108. H209 and H213 together coordinate Fe cation.

Belongs to the bacterial ring-hydroxylating dioxygenase alpha subunit family. In terms of assembly, heterotetramer with a alpha2beta2 structure. Requires [2Fe-2S] cluster as cofactor. It depends on Fe cation as a cofactor.

The enzyme catalyses 2-aminobenzenesulfonate + NADH + O2 + 2 H(+) = 2,3-dihydroxybenzenesulfonate + NH4(+) + NAD(+). Its activity is regulated as follows. Inhibited by o-phenanthroline. Functionally, alpha subunit of the oxygenase component of the 2-aminobenzenesulfonate 2,3-dioxygenase system (deaminating) (ABSDOS). Can use 2-aminobenzenesulfonate (ABS), benzenesulfonate (BS), 4-toluenesulfonate (TS), 2-nitrobenzenesulfonate, 3- and 4-aminobenzenesulfonates, 4-chloro- and 4-hydroxybenzenesulfonates and pyridine-3-sulfonate as substrates. No desulfonation of ABS to aminocatechol or aminophenol detected. The sequence is that of 2-aminobenzenesulfonate 2,3-dioxygenase subunit alpha from Alcaligenes sp.